The chain runs to 462 residues: S-alkyl-thiohydroximate lyase SUR1 (462 aa).

It belongs to the class-I pyridoxal-phosphate-dependent aminotransferase family. Pyridoxal 5'-phosphate is required as a cofactor.

In terms of biological role, C-S lyase involved in glucosinolate biosynthesis. Converts S-(alkylacetohydroximoyl)-L-cysteine to thiohydroximate. Functions in auxin homeostasis. Probably required for glucosinolate activation in response to pathogens. This Arabidopsis thaliana (Mouse-ear cress) protein is S-alkyl-thiohydroximate lyase SUR1 (SUR1).